A 689-amino-acid polypeptide reads, in one-letter code: Glycine--tRNA ligase beta subunit (689 aa).

It belongs to the class-II aminoacyl-tRNA synthetase family. As to quaternary structure, tetramer of two alpha and two beta subunits.

It is found in the cytoplasm. The enzyme catalyses tRNA(Gly) + glycine + ATP = glycyl-tRNA(Gly) + AMP + diphosphate. This Salmonella choleraesuis (strain SC-B67) protein is Glycine--tRNA ligase beta subunit.